Reading from the N-terminus, the 190-residue chain is MASRGKSETSKLRQNMEEQLDRLMQQLQDLEECREDLEEEEYEETKKETLEQLSEFNDSLKKLMSGNMTLVDELGGMQLAIQAAISQAFKTPEVIRLFAKKQPGQLRTRLAEMDRDVMVGKLSRDVFTQQKVEILTALRKLGEKLTTEDEAFLAANASATLSHFEKVTASLGSEDKIMALASSGVGKTQT.

A coiled-coil region spans residues 6–64 (KSETSKLRQNMEEQLDRLMQQLQDLEECREDLEEEEYEETKKETLEQLSEFNDSLKKLM).

The protein belongs to the CTNNBIP1 family. Does not interact with CTNNB1.

Its function is as follows. Required for neuronal survival during early development. This is Protein LZIC (lzic) from Danio rerio (Zebrafish).